Here is a 628-residue protein sequence, read N- to C-terminus: Zinc finger protein 555 (628 aa).

The 74-residue stretch at 4–77 (VVFEDVAVDF…ESKIATFTRN (74 aa)) folds into the KRAB domain. The C2H2-type 1; degenerate zinc-finger motif lies at 172-194 (YQCQECGQAYSCRSHLRMHVRTH). C2H2-type zinc fingers lie at residues 200 to 222 (YVCK…VRIH), 228 to 250 (YECK…LRSH), 256 to 278 (YKCK…TITH), 284 to 306 (YKCK…MISH), 312 to 334 (HKCK…MITH), 340 to 362 (YECK…ERIH), 368 to 390 (YECK…ERTH), 396 to 418 (YECN…MRVH), 424 to 446 (YECK…MRTH), 452 to 474 (YECK…VRMH), 480 to 502 (YECK…MRRH), 508 to 530 (YKCK…VRTH), 536 to 558 (YECK…MRLH), and 564 to 586 (YQCK…VRIH).

It belongs to the krueppel C2H2-type zinc-finger protein family.

It localises to the nucleus. May be involved in transcriptional regulation. In Homo sapiens (Human), this protein is Zinc finger protein 555 (ZNF555).